The chain runs to 714 residues: METSVSEIQIETKDEKRPEAASPQKERQERKTATLCFKRRKKVNKKKAKAGSKTAEETEKHAPEAGGSGQRQPAGAWASIKRLVTHRKPSESAEKQKPSEAEMQPEDGALPKKKTKSKLKIPCIRFSRGAKRSRPSKLTEDSGYVRVQGEADDLEIKAQIQPDEQATQAKSTQGLQEDVIVRDGKEIQESHISNNVISGEHVIGIELELEKESSALRMRTPGSEKEAKVILVKQGVQVQEASVLENSAADSPQPVTSTAPLSPATTHQLGLEEPSDSIRESAPSGKDDGRRKTAAEEKKSGETALGQAEEASSVSQADKSVLSQAEEATVGHTEEATVIQAQSQAKEGKLSQAEEATVAQAKETVLSQAEEVKLSQIEEPAISQAKKATVGQAKEAYVSQAEEAIVGHTEKATMGQAEEATVGHIEKTTVGQAEEATVGQAEEATVGQAEEATVGQAEEATVGQAEEATVGQAGEATVSHIEKTTVGQAEEAIVGQAEEATVGQAEEATVGQAEEATVGQAEEATVDQAEEATVGQAEEATVGQAGEAAVGQAEEAIVAQAEEATVGQAGEATVGQAEKATVGQAEEPIVGQAEETVLRHASDLKVNGVDAEKPRSEESKRMEPIAIIITDTEISEFDVKKSKNVPKQFLISMENEQVGVFANDSDFEGRTSEQYETLLIETASSLVKNAIELSVEQLVNEMVSEDNQINTLFQ.

Disordered regions lie at residues 1 to 146 (METS…GYVR) and 243 to 333 (VLEN…VGHT). Positions 1–164 (METSVSEIQI…EIKAQIQPDE (164 aa)) are essential to the intracellular anchoring function. 2 positions are modified to phosphoserine: S4 and S22. Residues 10-32 (IETKDEKRPEAASPQKERQERKT) show a composition bias toward basic and acidic residues. C36 is lipidated: S-palmitoyl cysteine. Basic residues predominate over residues 37 to 50 (FKRRKKVNKKKAKA). Composition is skewed to basic and acidic residues over residues 54-63 (TAEETEKHAP) and 88-100 (KPSE…KPSE). Positions 74 to 94 (AGAWASIKRLVTHRKPSESAE) match the AKAP CaM-binding motif. A lipid anchor (S-palmitoyl cysteine) is attached at C123. Over residues 243-268 (VLENSAADSPQPVTSTAPLSPATTHQ) the composition is skewed to polar residues. A compositionally biased stretch (basic and acidic residues) spans 285 to 301 (GKDDGRRKTAAEEKKSG). A 1; approximate repeat occupies 305–312 (LGQAEEAS). A 28 X 8 AA repeats of V-G-Q-A-E-E-A-T region spans residues 305–597 (LGQAEEASSV…PIVGQAEETV (293 aa)). The span at 310–323 (EASSVSQADKSVLS) shows a compositional bias: polar residues. Residues 322–329 (LSQAEEAT) form a 2; approximate repeat. The stretch at 330 to 337 (VGHTEEAT) is one 3; approximate repeat. Residues 350-357 (LSQAEEAT) form a 4; approximate repeat. Residues 358–365 (VAQAKETV) form a 5; approximate repeat. The 6; approximate repeat unit spans residues 366-373 (LSQAEEVK). A 7; approximate repeat occupies 398-405 (VSQAEEAI). An 8; approximate repeat occupies 414–421 (MGQAEEAT). 5 consecutive repeat copies span residues 430 to 437 (VGQAEEAT), 438 to 445 (VGQAEEAT), 446 to 453 (VGQAEEAT), 454 to 461 (VGQAEEAT), and 462 to 469 (VGQAEEAT). One copy of the 14; approximate repeat lies at 470–477 (VGQAGEAT). A 15; approximate repeat occupies 486–493 (VGQAEEAI). Repeat copies occupy residues 494–501 (VGQAEEAT), 502–509 (VGQAEEAT), 510–517 (VGQAEEAT), and 518–525 (VGQAEEAT). The 20; approximate repeat unit spans residues 526 to 533 (VDQAEEAT). Copy 21 of the repeat occupies 534–541 (VGQAEEAT). One copy of the 22; approximate repeat lies at 542-549 (VGQAGEAA). One copy of the 23; approximate repeat lies at 550–557 (VGQAEEAI). The 24; approximate repeat unit spans residues 558–565 (VAQAEEAT). Repeat unit 25 spans residues 566–573 (VGQAGEAT). The 26; approximate repeat unit spans residues 574 to 581 (VGQAEKAT). One copy of the 27; approximate repeat lies at 582–589 (VGQAEEPI). The stretch at 590–597 (VGQAEETV) is one 28; approximate repeat. The RII-beta subunit binding domain stretch occupies residues 675–696 (YETLLIETASSLVKNAIELSVE). The interval 697 to 714 (QLVNEMVSEDNQINTLFQ) is tethers NFATC2 to CRAC channels.

As to quaternary structure, binding protein for dimer of the RII-beta regulatory subunit of cAMP-dependent protein kinase (PKA) and also for the protein kinase C (PKC) and the phosphatase calcineurin (PP2B). Each enzyme is inhibited when bound to the anchoring protein. Also binds the beta2-adrenergic receptor. Part of a complex containing AKAP5, ADCY5, ADCY6 and PDE4C. Interacts with ADCY8, and enhances its phosphorylation at lipid rafts. Interacts with ORAI1 (isoform alpha) (via N-terminus) upon store depletion and in response to LTC4. Does not interact with ORAI2 and ORAI3 paralogs. Interacts (via leucine zipper domain) with NFATC2/NFAT1. Interacts with calmodulin; the interaction is calcium-independent. Interacts with KCNQ2; the interaction may help KCNQ2 channel complex to retain calcium-bound calmodulin. Interacts with KCNK2; the channel is recruited to postsynaptic microdomains by AKAP5 where it can integrate neurotransmitter receptor signals. Part of a complex composed of AKAP5 and ADRB2. Palmitoylated. Palmitoylation at Cys-36 and Cys-123 plays a key role in the targeting of AKAP5 to lipid rafts. Palmitoylation by ZDHHC2 is required for AKAP5 function in LTP-stimulated recycling endosome exocytosis.

The protein resides in the postsynaptic recycling endosome membrane. The protein localises to the cell projection. Its subcellular location is the dendrite. It is found in the postsynaptic cell membrane. Its function is as follows. Multivalent scaffold protein that anchors the cAMP-dependent protein kinase/PKA to cytoskeletal and/or organelle-associated proteins, targeting the signal carried by cAMP to specific intracellular effectors. Association with the beta2-adrenergic receptor (beta2-AR) not only regulates beta2-AR signaling pathway, but also the activation by PKA by switching off the beta2-AR signaling cascade. Plays a role in long term synaptic potentiation by regulating protein trafficking from the dendritic recycling endosomes to the plasma membrane and controlling both structural and functional plasticity at excitatory synapses. In hippocampal pyramidal neurons, recruits KCNK2/TREK-1 channel at postsynaptic dense bodies microdomains and converts it to a leak channel no longer sensitive to stimulation by arachidonic acid, acidic pH or mechanical stress, nor inhibited by Gq-coupled receptors but still under the negative control of Gs-coupled receptors. Associates with ORAI1 pore-forming subunit of CRAC channels in Ca(2+) signaling microdomains where it recruits NFATC2/NFAT1 and couples store-operated Ca(2+) influx to calmodulin and calcineurin signaling and activation of NFAT-dependent transcriptional responses. This Rattus norvegicus (Rat) protein is A-kinase anchor protein 5 (Akap5).